The sequence spans 263 residues: Apolipoprotein A-I (263 aa).

Residues 1-18 (MKAVVLAVAVLFLTGSQA) form the signal peptide. A run of 2 repeats spans residues 66–87 (LKLL…SELG) and 88–109 (PVTQ…QEMN). Residues 66–263 (LKLLDNWDTL…DEVSKKLSAQ (198 aa)) form a 10 X approximate tandem repeats region. Residue Met108 is modified to Methionine sulfoxide. A 3; half-length repeat occupies 110–120 (KDLVEVKEKVQ). Tandem repeats lie at residues 121 to 142 (PYLK…KKVE), 143 to 164 (PLGT…EKLT), 165 to 186 (PLGE…AQLG), 187 to 206 (PYSD…LKDS), and 207 to 228 (ASLA…EKAK). The stretch at 229 to 239 (PALEDLRLGLL) is one 9; half-length repeat. Repeat 10 spans residues 240 to 263 (PVLESLKASFLSSIDEVSKKLSAQ).

Belongs to the apolipoprotein A1/A4/E family. In terms of assembly, homodimer. Interacts with APOA1BP and CLU. Component of a sperm activating protein complex (SPAP), consisting of APOA1, an immunoglobulin heavy chain, an immunoglobulin light chain and albumin. Interacts with NDRG1. Interacts with SCGB3A2. Interacts with NAXE and YJEFN3. In terms of processing, glycosylated. Palmitoylated. Post-translationally, phosphorylation sites are present in the extracellular medium.

The protein localises to the secreted. Participates in the reverse transport of cholesterol from tissues to the liver for excretion by promoting cholesterol efflux from tissues and by acting as a cofactor for the lecithin cholesterol acyltransferase (LCAT). As part of the SPAP complex, activates spermatozoa motility. The chain is Apolipoprotein A-I (APOA1) from Octodon degus (Degu).